Reading from the N-terminus, the 167-residue chain is 16S rRNA aminocarboxypropyltransferase (167 aa).

5 residues coordinate S-adenosyl-L-methionine: Thr-17, Val-62, Leu-84, Tyr-99, and Ser-103.

It belongs to the TDD superfamily. TSR3 family.

Its subcellular location is the cytoplasm. The catalysed reaction is an N(1)-methylpseudouridine in rRNA + S-adenosyl-L-methionine = N(1)-methyl-N(3)-[(3S)-3-amino-3-carboxypropyl]pseudouridine in rRNA + S-methyl-5'-thioadenosine + H(+). Aminocarboxypropyltransferase that catalyzes the aminocarboxypropyl transfer on pseudouridine corresponding to position 914 in M.jannaschii 16S rRNA. It constitutes the last step in biosynthesis of the hypermodified N1-methyl-N3-(3-amino-3-carboxypropyl) pseudouridine (m1acp3-Psi). The protein is 16S rRNA aminocarboxypropyltransferase of Sulfurisphaera tokodaii (strain DSM 16993 / JCM 10545 / NBRC 100140 / 7) (Sulfolobus tokodaii).